Reading from the N-terminus, the 580-residue chain is Arginine--tRNA ligase (580 aa).

A 'HIGH' region motif is present at residues 131–141 (ANPTGPMHVGH).

The protein belongs to the class-I aminoacyl-tRNA synthetase family. In terms of assembly, monomer.

The protein resides in the cytoplasm. The catalysed reaction is tRNA(Arg) + L-arginine + ATP = L-arginyl-tRNA(Arg) + AMP + diphosphate. In Cereibacter sphaeroides (strain KD131 / KCTC 12085) (Rhodobacter sphaeroides), this protein is Arginine--tRNA ligase.